The sequence spans 705 residues: Elongation factor G (705 aa).

Residues histidine 8 to alanine 290 form the tr-type G domain. Residues alanine 17–threonine 24, aspartate 88–histidine 92, and asparagine 142–aspartate 145 each bind GTP.

Belongs to the TRAFAC class translation factor GTPase superfamily. Classic translation factor GTPase family. EF-G/EF-2 subfamily.

It is found in the cytoplasm. Functionally, catalyzes the GTP-dependent ribosomal translocation step during translation elongation. During this step, the ribosome changes from the pre-translocational (PRE) to the post-translocational (POST) state as the newly formed A-site-bound peptidyl-tRNA and P-site-bound deacylated tRNA move to the P and E sites, respectively. Catalyzes the coordinated movement of the two tRNA molecules, the mRNA and conformational changes in the ribosome. The protein is Elongation factor G of Xylella fastidiosa (strain 9a5c).